The primary structure comprises 501 residues: uncharacterized protein (501 aa).

Disordered regions lie at residues 179–404 (EKTS…DETA) and 480–501 (SDDT…DDSD). The segment covering 191 to 200 (SRNESQDKSR) has biased composition (basic and acidic residues). Basic residues predominate over residues 201–214 (DKSRKKVCNTHKNK). Positions 215–226 (KTLDNVKPDKNI) are enriched in basic and acidic residues. A compositionally biased stretch (low complexity) spans 231–274 (SSNKFTTNKPKSNKNSSDSDGSTKTTKSTRSTKSTKSSKSQKST). Basic and acidic residues predominate over residues 304 to 316 (NPKESINHKKNDS). Residues 333–352 (DSTNCRKSNRTTTRDVTNSD) are compositionally biased toward polar residues. Positions 379-403 (EQSDLTEDETEENVSEEDETEEDET) are enriched in acidic residues.

This is an uncharacterized protein from Acanthamoeba polyphaga mimivirus (APMV).